A 1400-amino-acid chain; its full sequence is DNA-directed RNA polymerase subunit beta' (1400 aa).

The Zn(2+) site is built by C70, C72, C85, and C88. Residues D460, D462, and D464 each contribute to the Mg(2+) site. Zn(2+)-binding residues include C814, C887, C894, and C897.

This sequence belongs to the RNA polymerase beta' chain family. In terms of assembly, the RNAP catalytic core consists of 2 alpha, 1 beta, 1 beta' and 1 omega subunit. When a sigma factor is associated with the core the holoenzyme is formed, which can initiate transcription. It depends on Mg(2+) as a cofactor. The cofactor is Zn(2+).

It carries out the reaction RNA(n) + a ribonucleoside 5'-triphosphate = RNA(n+1) + diphosphate. In terms of biological role, DNA-dependent RNA polymerase catalyzes the transcription of DNA into RNA using the four ribonucleoside triphosphates as substrates. In Marinomonas sp. (strain MWYL1), this protein is DNA-directed RNA polymerase subunit beta'.